The primary structure comprises 77 residues: Putative membrane protein insertion efficiency factor (77 aa).

Belongs to the UPF0161 family.

The protein localises to the cell membrane. In terms of biological role, could be involved in insertion of integral membrane proteins into the membrane. This Geobacillus sp. (strain WCH70) protein is Putative membrane protein insertion efficiency factor.